A 101-amino-acid polypeptide reads, in one-letter code: Small ribosomal subunit protein uS14 (101 aa).

This sequence belongs to the universal ribosomal protein uS14 family. In terms of assembly, part of the 30S ribosomal subunit. Contacts proteins S3 and S10.

Its function is as follows. Binds 16S rRNA, required for the assembly of 30S particles and may also be responsible for determining the conformation of the 16S rRNA at the A site. This is Small ribosomal subunit protein uS14 from Cupriavidus pinatubonensis (strain JMP 134 / LMG 1197) (Cupriavidus necator (strain JMP 134)).